An 885-amino-acid chain; its full sequence is Leucine--tRNA ligase (885 aa).

The short motif at P43–H53 is the 'HIGH' region element. A 'KMSKS' region motif is present at residues K571–S575. K574 is a binding site for ATP. Residues S866–D885 are disordered.

This sequence belongs to the class-I aminoacyl-tRNA synthetase family.

The protein localises to the cytoplasm. The enzyme catalyses tRNA(Leu) + L-leucine + ATP = L-leucyl-tRNA(Leu) + AMP + diphosphate. The sequence is that of Leucine--tRNA ligase from Halobacterium salinarum (strain ATCC 700922 / JCM 11081 / NRC-1) (Halobacterium halobium).